The primary structure comprises 492 residues: UDP-N-acetylmuramoyl-L-alanyl-D-glutamate--2,6-diaminopimelate ligase (492 aa).

Ser30 contributes to the UDP-N-acetyl-alpha-D-muramoyl-L-alanyl-D-glutamate binding site. 114-120 (GTNGKTS) contacts ATP. UDP-N-acetyl-alpha-D-muramoyl-L-alanyl-D-glutamate-binding positions include 156–157 (TT), Ser183, Gln189, and Arg191. Residue Lys223 is modified to N6-carboxylysine. Residues Arg389, 413 to 416 (DNPR), Gly462, and Glu466 contribute to the meso-2,6-diaminopimelate site. The short motif at 413 to 416 (DNPR) is the Meso-diaminopimelate recognition motif element.

It belongs to the MurCDEF family. MurE subfamily. It depends on Mg(2+) as a cofactor. In terms of processing, carboxylation is probably crucial for Mg(2+) binding and, consequently, for the gamma-phosphate positioning of ATP.

It localises to the cytoplasm. It catalyses the reaction UDP-N-acetyl-alpha-D-muramoyl-L-alanyl-D-glutamate + meso-2,6-diaminopimelate + ATP = UDP-N-acetyl-alpha-D-muramoyl-L-alanyl-gamma-D-glutamyl-meso-2,6-diaminopimelate + ADP + phosphate + H(+). It functions in the pathway cell wall biogenesis; peptidoglycan biosynthesis. Functionally, catalyzes the addition of meso-diaminopimelic acid to the nucleotide precursor UDP-N-acetylmuramoyl-L-alanyl-D-glutamate (UMAG) in the biosynthesis of bacterial cell-wall peptidoglycan. The chain is UDP-N-acetylmuramoyl-L-alanyl-D-glutamate--2,6-diaminopimelate ligase from Neisseria meningitidis serogroup A / serotype 4A (strain DSM 15465 / Z2491).